The sequence spans 137 residues: Large ribosomal subunit protein uL16c (137 aa).

This sequence belongs to the universal ribosomal protein uL16 family. Part of the 50S ribosomal subunit.

The protein resides in the plastid. The protein localises to the chloroplast. The sequence is that of Large ribosomal subunit protein uL16c from Adiantum capillus-veneris (Maidenhair fern).